We begin with the raw amino-acid sequence, 362 residues long: Probable endopolygalacturonase B (362 aa).

A signal peptide spans 1 to 20 (MHFLQNAVVAATMGAALAAA). The propeptide occupies 21–25 (APLEK). Cysteines 28 and 43 form a disulfide. PbH1 repeat units lie at residues 155-184 (ADHL…DIGQ), 185-206 (STYI…AINS), 207-227 (GEHI…SIGS), 236-257 (VNDV…RIKT), 265-287 (VENV…VVEQ), and 299-344 (TNGV…DVTG). The active-site Proton donor is the D199. Cysteines 201 and 217 form a disulfide. H221 is an active-site residue. C327 and C332 form a disulfide bridge. Residue N334 is glycosylated (N-linked (GlcNAc...) asparagine). C351 and C360 are joined by a disulfide.

Belongs to the glycosyl hydrolase 28 family.

The protein localises to the secreted. The enzyme catalyses (1,4-alpha-D-galacturonosyl)n+m + H2O = (1,4-alpha-D-galacturonosyl)n + (1,4-alpha-D-galacturonosyl)m.. Its function is as follows. Involved in maceration and soft-rotting of plant tissue. Hydrolyzes the 1,4-alpha glycosidic bonds of de-esterified pectate in the smooth region of the plant cell wall. This Aspergillus niger (strain ATCC MYA-4892 / CBS 513.88 / FGSC A1513) protein is Probable endopolygalacturonase B (pgaB).